A 92-amino-acid chain; its full sequence is Small ribosomal subunit protein uS19 (92 aa).

This sequence belongs to the universal ribosomal protein uS19 family.

Its function is as follows. Protein S19 forms a complex with S13 that binds strongly to the 16S ribosomal RNA. This is Small ribosomal subunit protein uS19 from Aliivibrio salmonicida (strain LFI1238) (Vibrio salmonicida (strain LFI1238)).